Reading from the N-terminus, the 148-residue chain is 3-hydroxyacyl-[acyl-carrier-protein] dehydratase FabZ (148 aa).

The active site involves His55.

The protein belongs to the thioester dehydratase family. FabZ subfamily.

It is found in the cytoplasm. It carries out the reaction a (3R)-hydroxyacyl-[ACP] = a (2E)-enoyl-[ACP] + H2O. In terms of biological role, involved in unsaturated fatty acids biosynthesis. Catalyzes the dehydration of short chain beta-hydroxyacyl-ACPs and long chain saturated and unsaturated beta-hydroxyacyl-ACPs. This Haemophilus influenzae (strain ATCC 51907 / DSM 11121 / KW20 / Rd) protein is 3-hydroxyacyl-[acyl-carrier-protein] dehydratase FabZ.